The following is a 1875-amino-acid chain: Soluble starch synthase 3a, chloroplastic/amyloplastic (1875 aa).

Residues 1 to 49 constitute a chloroplast transit peptide; the sequence is MEMALRPQSLLCPRSRLKVVIRPASSASGGGLAQYFLMTRRYTGSRIVR. Residues 1007-1065 are a coiled coil; it reads KRELERVATEEAERRRHAEEQQRMGEQRAAEQAAREQAKKEIELKKNKLQNLLSSARTH. Residues 1014–1043 form a disordered region; that stretch reads ATEEAERRRHAEEQQRMGEQRAAEQAAREQ.

It belongs to the glycosyltransferase 1 family. Bacterial/plant glycogen synthase subfamily. In terms of tissue distribution, expressed in the endosperm.

Its subcellular location is the plastid. The protein resides in the chloroplast. The protein localises to the amyloplast. The enzyme catalyses [(1-&gt;4)-alpha-D-glucosyl](n) + ADP-alpha-D-glucose = [(1-&gt;4)-alpha-D-glucosyl](n+1) + ADP + H(+). Its pathway is glycan biosynthesis; starch biosynthesis. Involved in starch synthesis in endosperm amyloplasts. Plays an important role in the elongation of amylopectin B chains. The chain is Soluble starch synthase 3a, chloroplastic/amyloplastic from Oryza sativa subsp. japonica (Rice).